Reading from the N-terminus, the 597-residue chain is Elongation factor 4 (597 aa).

The tr-type G domain occupies 2–184; it reads DHIRNFSIIA…ALVAKVPPPK (183 aa). GTP-binding positions include 14 to 19 and 131 to 134; these read DHGKST and NKID.

The protein belongs to the TRAFAC class translation factor GTPase superfamily. Classic translation factor GTPase family. LepA subfamily.

It is found in the cell inner membrane. The catalysed reaction is GTP + H2O = GDP + phosphate + H(+). In terms of biological role, required for accurate and efficient protein synthesis under certain stress conditions. May act as a fidelity factor of the translation reaction, by catalyzing a one-codon backward translocation of tRNAs on improperly translocated ribosomes. Back-translocation proceeds from a post-translocation (POST) complex to a pre-translocation (PRE) complex, thus giving elongation factor G a second chance to translocate the tRNAs correctly. Binds to ribosomes in a GTP-dependent manner. The sequence is that of Elongation factor 4 from Paraburkholderia xenovorans (strain LB400).